The following is an 873-amino-acid chain: Mitogen-activated protein kinase kinase kinase kinase 3 (873 aa).

The residue at position 1 (M1) is an N-acetylmethionine. The Protein kinase domain maps to F16–V273. Residues I22 to V30 and K45 contribute to the ATP site. The Proton acceptor role is filled by D136. Residues S329 and S377 each carry the phosphoserine modification. Positions A389–T518 are disordered. Positions H452–K466 are enriched in pro residues. The segment covering V487–L499 has biased composition (polar residues). The CNH domain occupies P535–V846.

The protein belongs to the protein kinase superfamily. STE Ser/Thr protein kinase family. STE20 subfamily. As to quaternary structure, interacts with SH3GL2. Interaction appears to regulate MAP4K3-mediated JNK activation. Mg(2+) serves as cofactor.

The enzyme catalyses L-seryl-[protein] + ATP = O-phospho-L-seryl-[protein] + ADP + H(+). The catalysed reaction is L-threonyl-[protein] + ATP = O-phospho-L-threonyl-[protein] + ADP + H(+). Functionally, serine/threonine kinase that plays a role in the response to environmental stress. Appears to act upstream of the JUN N-terminal pathway. Activator of the Hippo signaling pathway which plays a pivotal role in organ size control and tumor suppression by restricting proliferation and promoting apoptosis. MAP4Ks act in parallel to and are partially redundant with STK3/MST2 and STK4/MST2 in the phosphorylation and activation of LATS1/2, and establish MAP4Ks as components of the expanded Hippo pathway. The polypeptide is Mitogen-activated protein kinase kinase kinase kinase 3 (Map4k3) (Rattus norvegicus (Rat)).